A 152-amino-acid polypeptide reads, in one-letter code: Probable flagellum biosynthesis repressor protein FlbT (152 aa).

The protein belongs to the FlbT family.

Functionally, has a post-transcriptional repressor function in flagellum biogenesis. Associates with the 5'-UTR of fljK mRNA and promotes its degradation. This chain is Probable flagellum biosynthesis repressor protein FlbT, found in Brucella abortus (strain S19).